Reading from the N-terminus, the 361-residue chain is Mannose-1-phosphate guanyltransferase (361 aa).

The protein belongs to the transferase hexapeptide repeat family.

The protein resides in the cytoplasm. The enzyme catalyses alpha-D-mannose 1-phosphate + GTP + H(+) = GDP-alpha-D-mannose + diphosphate. It participates in nucleotide-sugar biosynthesis; GDP-alpha-D-mannose biosynthesis; GDP-alpha-D-mannose from alpha-D-mannose 1-phosphate (GTP route): step 1/1. Involved in cell wall synthesis where it is required for glycosylation. Involved in cell cycle progression through cell-size checkpoint. In Eremothecium gossypii (strain ATCC 10895 / CBS 109.51 / FGSC 9923 / NRRL Y-1056) (Yeast), this protein is Mannose-1-phosphate guanyltransferase (MPG1).